Here is a 2147-residue protein sequence, read N- to C-terminus: Non-reducing polyketide synthase albA (2147 aa).

The segment at 8–244 (YLFGDQTSDI…VKAPIHGPYH (237 aa)) is N-terminal acylcarrier protein transacylase domain (SAT). Positions 375-806 (CSKIAIIGMS…GGNTAILLED (432 aa)) constitute a Ketosynthase family 3 (KS3) domain. Active-site for beta-ketoacyl synthase activity residues include Cys-547, His-682, and His-724. Residues 912–1232 (FVFTGQGAQY…LSSLHLAGID (321 aa)) form a malonyl-CoA:ACP transacylase (MAT) domain region. Ser-1001 serves as the catalytic For acyl/malonyl transferase activity. The segment at 1286 to 1425 (HEFLTTAAQK…CTVRFFDCAA (140 aa)) is N-terminal hotdog fold. Positions 1286–1598 (HEFLTTAAQK…FQGLSRKILD (313 aa)) constitute a PKS/mFAS DH domain. Residues 1290-1603 (TTAAQKVIET…RKILDTVLPP (314 aa)) form a product template (PT) domain region. His-1326 serves as the catalytic Proton acceptor; for dehydratase activity. The tract at residues 1452–1598 (DAHRLGRGMV…FQGLSRKILD (147 aa)) is C-terminal hotdog fold. Asp-1511 functions as the Proton donor; for dehydratase activity in the catalytic mechanism. Residues 1608 to 1637 (KGPARPAASAQKAAPAATSKSRASAPAPAK) form a disordered region. Over residues 1610–1637 (PARPAASAQKAAPAATSKSRASAPAPAK) the composition is skewed to low complexity. A Carrier 1 domain is found at 1642–1719 (PSAPSLVKRA…DFKQFLAPMS (78 aa)). O-(pantetheine 4'-phosphoryl)serine is present on Ser-1679. Positions 1719–1759 (SQGEASDGSTSDPESSSSFNGGSSTDESSAGSPVSSPPNEK) are disordered. Positions 1724-1747 (SDGSTSDPESSSSFNGGSSTDESS) are enriched in low complexity. One can recognise a Carrier 2 domain in the interval 1760–1837 (IEQHATMKEI…DVEDALGLKP (78 aa)). The residue at position 1797 (Ser-1797) is an O-(pantetheine 4'-phosphoryl)serine. Positions 1873-2145 (SPHPRSTSIL…ELGSFIGNAM (273 aa)) are claisen cyclase domain. The active-site For Claisen cyclase activity is Ser-1963.

It catalyses the reaction 6 malonyl-CoA + acetyl-CoA + 6 H(+) = naphtopyrone YWA1 + 6 CO2 + 7 CoA + H2O. The protein operates within secondary metabolite biosynthesis. Non-reducing polyketide synthase involved in the biosynthesis of bifonsecin B, a dimeric gamma-naphthopyrone. The first step in the biosynthesis of bifonsecin B is the production of gamma-naphthopyrone precursor YWA1 by the non-reducing polyketide synthase albA, via condensation of one acetyl-CoA starter unit with 6 malonyl-CoA units. YWA1 is then methylated by bfoE at position C-6 to yield foncesin which is further methylated at position C-8 by bfoD to produce fonsecin B. A key enzyme in the biosynthetic pathway is the cytochrome P450 monooxygenase bfoB which catalyzes the oxidative dimerization of fonsecin B to bifonsecin B. Bfob also catalyzes the oxidative dimerization of rubrofusarin B into nigerone. The stereoselectivity of bfoB is influenced by the two natural monomeric substrates; homodimerization of fonsecin B yields a stereochemically pure biaryl, M-foncerine B, while rubrofusarin B yields a mixture of enantiomers M- and P-nigerone. This is Non-reducing polyketide synthase albA from Aspergillus brasiliensis (strain CBS 101740 / IMI 381727 / IBT 21946).